The following is a 188-amino-acid chain: ATP synthase subunit b (188 aa).

A helical membrane pass occupies residues 21–41 (ILPHLGELIVGIIFAIIIYAV).

It belongs to the ATPase B chain family. As to quaternary structure, F-type ATPases have 2 components, F(1) - the catalytic core - and F(0) - the membrane proton channel. F(1) has five subunits: alpha(3), beta(3), gamma(1), delta(1), epsilon(1). F(0) has three main subunits: a(1), b(2) and c(10-14). The alpha and beta chains form an alternating ring which encloses part of the gamma chain. F(1) is attached to F(0) by a central stalk formed by the gamma and epsilon chains, while a peripheral stalk is formed by the delta and b chains.

It localises to the cell membrane. F(1)F(0) ATP synthase produces ATP from ADP in the presence of a proton or sodium gradient. F-type ATPases consist of two structural domains, F(1) containing the extramembraneous catalytic core and F(0) containing the membrane proton channel, linked together by a central stalk and a peripheral stalk. During catalysis, ATP synthesis in the catalytic domain of F(1) is coupled via a rotary mechanism of the central stalk subunits to proton translocation. Functionally, component of the F(0) channel, it forms part of the peripheral stalk, linking F(1) to F(0). The chain is ATP synthase subunit b from Kineococcus radiotolerans (strain ATCC BAA-149 / DSM 14245 / SRS30216).